A 100-amino-acid polypeptide reads, in one-letter code: Large ribosomal subunit protein uL23 (100 aa).

This sequence belongs to the universal ribosomal protein uL23 family. In terms of assembly, part of the 50S ribosomal subunit. Contacts protein L29, and trigger factor when it is bound to the ribosome.

Functionally, one of the early assembly proteins it binds 23S rRNA. One of the proteins that surrounds the polypeptide exit tunnel on the outside of the ribosome. Forms the main docking site for trigger factor binding to the ribosome. This is Large ribosomal subunit protein uL23 from Proteus mirabilis (strain HI4320).